The chain runs to 200 residues: Pyridoxal 5'-phosphate synthase subunit PdxT (200 aa).

Position 52 to 54 (Gly52 to Ser54) interacts with L-glutamine. The active-site Nucleophile is the Cys84. L-glutamine contacts are provided by residues Arg116 and Ile145 to Arg146. Catalysis depends on charge relay system residues His181 and Glu183.

The protein belongs to the glutaminase PdxT/SNO family. In the presence of PdxS, forms a dodecamer of heterodimers. Only shows activity in the heterodimer.

The enzyme catalyses aldehydo-D-ribose 5-phosphate + D-glyceraldehyde 3-phosphate + L-glutamine = pyridoxal 5'-phosphate + L-glutamate + phosphate + 3 H2O + H(+). It catalyses the reaction L-glutamine + H2O = L-glutamate + NH4(+). It participates in cofactor biosynthesis; pyridoxal 5'-phosphate biosynthesis. Catalyzes the hydrolysis of glutamine to glutamate and ammonia as part of the biosynthesis of pyridoxal 5'-phosphate. The resulting ammonia molecule is channeled to the active site of PdxS. The chain is Pyridoxal 5'-phosphate synthase subunit PdxT from Saccharolobus solfataricus (strain ATCC 35092 / DSM 1617 / JCM 11322 / P2) (Sulfolobus solfataricus).